The following is an 88-amino-acid chain: Molybdopterin synthase sulfur carrier subunit (88 aa).

Residue G88 is modified to 1-thioglycine; alternate. G88 is subject to Glycyl adenylate; alternate.

The protein belongs to the MoaD family. MOCS2A subfamily. In terms of assembly, heterotetramer; composed of 2 small (MOCS2A) and 2 large (MOCS2B) subunits. Post-translationally, C-terminal thiocarboxylation occurs in 2 steps, it is first acyl-adenylated (-COAMP) via the hesA/moeB/thiF part of uba4, then thiocarboxylated (-COSH) via the rhodanese domain of uba4.

The protein resides in the cytoplasm. It participates in cofactor biosynthesis; molybdopterin biosynthesis. Acts as a sulfur carrier required for molybdopterin biosynthesis. Component of the molybdopterin synthase complex that catalyzes the conversion of precursor Z into molybdopterin by mediating the incorporation of 2 sulfur atoms into precursor Z to generate a dithiolene group. In the complex, serves as sulfur donor by being thiocarboxylated (-COSH) at its C-terminus by uba4. After interaction with MOCS2B, the sulfur is then transferred to precursor Z to form molybdopterin. This chain is Molybdopterin synthase sulfur carrier subunit, found in Aspergillus niger (strain ATCC MYA-4892 / CBS 513.88 / FGSC A1513).